A 240-amino-acid polypeptide reads, in one-letter code: Biosynthetic peptidoglycan transglycosylase (240 aa).

The helical transmembrane segment at 15-35 threads the bilayer; it reads WMFYLGAVVAIAWLATQAFYF.

This sequence belongs to the glycosyltransferase 51 family.

The protein localises to the cell inner membrane. It catalyses the reaction [GlcNAc-(1-&gt;4)-Mur2Ac(oyl-L-Ala-gamma-D-Glu-L-Lys-D-Ala-D-Ala)](n)-di-trans,octa-cis-undecaprenyl diphosphate + beta-D-GlcNAc-(1-&gt;4)-Mur2Ac(oyl-L-Ala-gamma-D-Glu-L-Lys-D-Ala-D-Ala)-di-trans,octa-cis-undecaprenyl diphosphate = [GlcNAc-(1-&gt;4)-Mur2Ac(oyl-L-Ala-gamma-D-Glu-L-Lys-D-Ala-D-Ala)](n+1)-di-trans,octa-cis-undecaprenyl diphosphate + di-trans,octa-cis-undecaprenyl diphosphate + H(+). It functions in the pathway cell wall biogenesis; peptidoglycan biosynthesis. Its function is as follows. Peptidoglycan polymerase that catalyzes glycan chain elongation from lipid-linked precursors. The protein is Biosynthetic peptidoglycan transglycosylase of Paraburkholderia xenovorans (strain LB400).